Here is a 336-residue protein sequence, read N- to C-terminus: tRNA N6-adenosine threonylcarbamoyltransferase (336 aa).

Positions 114 and 118 each coordinate Fe cation. Substrate-binding positions include 136–140, D169, G182, D186, and N275; that span reads LVSGG. D302 serves as a coordination point for Fe cation.

Belongs to the KAE1 / TsaD family. Fe(2+) is required as a cofactor.

The protein resides in the cytoplasm. It catalyses the reaction L-threonylcarbamoyladenylate + adenosine(37) in tRNA = N(6)-L-threonylcarbamoyladenosine(37) in tRNA + AMP + H(+). Its function is as follows. Required for the formation of a threonylcarbamoyl group on adenosine at position 37 (t(6)A37) in tRNAs that read codons beginning with adenine. Is involved in the transfer of the threonylcarbamoyl moiety of threonylcarbamoyl-AMP (TC-AMP) to the N6 group of A37, together with TsaE and TsaB. TsaD likely plays a direct catalytic role in this reaction. The polypeptide is tRNA N6-adenosine threonylcarbamoyltransferase (Streptococcus agalactiae serotype III (strain NEM316)).